We begin with the raw amino-acid sequence, 538 residues long: MIETTKGGSGSYPIKTIVVLVQENRSFDHTLGWFKELNREIDGVTKSDPKSNTVSSSDTNSLRVVFGDQSQYVNPDPGHSIQDIYEQVFGKPWDSGKPDPNPGHPNMSGFAQNAERNKKGMSSAVMNGFKPNALPVYKELVQNFAICDRWFASVPASTQPNRLYVHSATSHGATSNDKKLLLEGFPQKTIFESLDEAGFSFGIYYQFPPSTLFYRNLRKLKYLTHFHQYGIQFKKDCKEGKLPNYVVVEQRWFDLLSTPANDDHPSHDVSEGQKLVKEVYEALRSSPQWNEILFIITYDEHGGFYDHVPTPVDGVPNPDGILGPPPYNFEFNRLGVRVPTFFISPWIEPGTVIHGPNGPYPRSQYEHSSIPATVKTIFKLKDFLSKRDSWAGTFESVITRDSPRQDCPETLSTPIKLRGTMAKENAQLSEFQEDLVIMAAGLKGDYKNEELIHKLCKETCVADASKYVTNAFEKFLEESRKARDRGCDENDIVYCVDDDDDHVVIPPQSHSEASNAAAQPKTQTSFFNKLFSCFIRHD.

The disordered stretch occupies residues 91 to 112 (KPWDSGKPDPNPGHPNMSGFAQ).

The protein belongs to the bacterial phospholipase C family. As to expression, expressed in root tips, cotyledons, on leaf margins, stems, young anthers and funiculus.

It localises to the cell membrane. The enzyme catalyses a 1,2-diacyl-sn-glycero-3-phosphocholine + H2O = phosphocholine + a 1,2-diacyl-sn-glycerol + H(+). Non-specific phospholipase C (PLC) which assumes major PLC activity during inorganic phosphate starvation. Substrate preference is phosphatidylcholine (PC), but can also hydrolyze phosphatidylethanolamine (PE) with lower efficiency. Has no activity toward phosphatidic acid (PA). Plays an important role in the supply of both inorganic phosphate and diacylglycerol from membrane-localized phospholipids during phosphate deprivation. May be required for lipid-derived signaling molecules that positively modulate abscisic acid (ABA) response and promote plant tolerance to drought and salt stresses. May be involved in brassinolide-mediated signaling in root development. In Arabidopsis thaliana (Mouse-ear cress), this protein is Non-specific phospholipase C4 (NPC4).